A 194-amino-acid chain; its full sequence is Protein GrpE (194 aa).

The segment at 1–44 (MAEEKQNEELNEQEELNETEAETAEAEQTAAEADAPAEETQTEM) is disordered. Over residues 9–25 (ELNEQEELNETEAETAE) the composition is skewed to acidic residues.

The protein belongs to the GrpE family. As to quaternary structure, homodimer.

The protein localises to the cytoplasm. Functionally, participates actively in the response to hyperosmotic and heat shock by preventing the aggregation of stress-denatured proteins, in association with DnaK and GrpE. It is the nucleotide exchange factor for DnaK and may function as a thermosensor. Unfolded proteins bind initially to DnaJ; upon interaction with the DnaJ-bound protein, DnaK hydrolyzes its bound ATP, resulting in the formation of a stable complex. GrpE releases ADP from DnaK; ATP binding to DnaK triggers the release of the substrate protein, thus completing the reaction cycle. Several rounds of ATP-dependent interactions between DnaJ, DnaK and GrpE are required for fully efficient folding. The chain is Protein GrpE from Bacillus licheniformis (strain ATCC 14580 / DSM 13 / JCM 2505 / CCUG 7422 / NBRC 12200 / NCIMB 9375 / NCTC 10341 / NRRL NRS-1264 / Gibson 46).